The chain runs to 116 residues: Diuretic hormone class 2 (116 aa).

A signal peptide spans 1–25; the sequence is MTNRCACFALAFLLFCLLAISSIEA. Positions 26–75 are excised as a propeptide; it reads APMPSQSNGGYGGAGYNELEEVPDDLLMELMTRFGRTIIRARNDLENSKR. The residue at position 106 (Pro106) is a Proline amide. A propeptide spanning residues 112-116 is cleaved from the precursor; it reads SETDV.

It localises to the secreted. Functionally, regulation of fluid secretion. Stimulates Malpighian tubules fluid secretion by activating the apical membrane V-ATPase via cyclic AMP of principal cells in the main secretory segment. The chain is Diuretic hormone class 2 (Dh31) from Drosophila melanogaster (Fruit fly).